The sequence spans 225 residues: Zinc finger protein 22 (225 aa).

The segment at 1–35 (MRLGKPKGGISRSSSQGKVYENQRKTGRQRQRWGM) is disordered. At Lys-18 the chain carries N6-acetyllysine. C2H2-type zinc fingers lie at residues 55-77 (YKCV…QKIH), 83-105 (HKCA…RRVH), 111-133 (YRCD…QRIH), 139-161 (YQCD…QRTH), and 167-189 (YQCS…TKVH). The disordered stretch occupies residues 183–225 (RQHTKVHEEEKPRKTRGRSLRAKTHSLSSWKAGKGRRSAAGLR). Over residues 195–206 (RKTRGRSLRAKT) the composition is skewed to basic residues.

The protein belongs to the krueppel C2H2-type zinc-finger protein family.

Its subcellular location is the nucleus. Its function is as follows. Binds DNA through the consensus sequence 5'-CAATG-3'. May be involved in transcriptional regulation and may play a role in tooth formation. The sequence is that of Zinc finger protein 22 (ZNF22) from Bos taurus (Bovine).